The following is a 387-amino-acid chain: TSC22 domain family protein 4 (387 aa).

Disordered regions lie at residues 1–85 and 135–232; these read MSGG…GEPY and ISTP…RRDG. The span at 31 to 51 shows a compositional bias: pro residues; the sequence is PVPPALAGPPPRLPNGDPNPD. At T57 the chain carries Phosphothreonine. Phosphoserine is present on residues S62 and S165. Position 183 is a phosphothreonine (T183). Phosphoserine is present on residues S187, S189, and S219. Phosphothreonine is present on T223. A phosphoserine mark is found at S254, S258, and S271. A leucine-zipper region spans residues 336–357; it reads LKEQIRDLAERNAALEQENGLL. S362 carries the post-translational modification Phosphoserine. Positions 368–387 are disordered; sequence QLPSSGLPRLGPSAPNGPSI.

It belongs to the TSC-22/Dip/Bun family. Forms a homodimer or heterodimer. Forms a heterodimer with TSC22D1 isoforms 1 and 2. Interacts with NRBP1. In terms of tissue distribution, expressed in the liver (at protein level). Expressed in Purkinje cells and proliferating cerebellar granular neurons (at protein level). Expressed in the cortex, medulla and papilla of the kidney.

It localises to the nucleus. Its subcellular location is the cytoplasm. It is found in the cell projection. The protein resides in the dendrite. The protein localises to the synapse. In terms of biological role, binds DNA and acts as a transcriptional repressor. Involved in the regulation of systematic glucose homeostasis and insulin sensitivity, via transcriptional repression of downstream insulin signaling targets such as OBP2A/LCN13. Acts as a negative regulator of lipogenic gene expression in hepatocytes and thereby mediates the control of very low-density lipoprotein release. May play a role in neurite elongation and survival. The polypeptide is TSC22 domain family protein 4 (Mus musculus (Mouse)).